The following is a 507-amino-acid chain: Inositol-3-phosphate synthase (507 aa).

The NAD(+) site is built by glycine 70, glycine 71, asparagine 72, asparagine 73, aspartate 143, isoleucine 180, glutamine 190, arginine 193, threonine 230, alanine 231, asparagine 232, threonine 233, glycine 281, serine 282, aspartate 306, serine 309, asparagine 340, asparagine 341, aspartate 342, lysine 355, alanine 391, aspartate 419, and serine 420.

It belongs to the myo-inositol 1-phosphate synthase family. NAD(+) serves as cofactor.

The protein resides in the cytoplasm. Its subcellular location is the cytosol. The protein localises to the nucleus. The enzyme catalyses D-glucose 6-phosphate = 1D-myo-inositol 3-phosphate. Its pathway is polyol metabolism; myo-inositol biosynthesis; myo-inositol from D-glucose 6-phosphate: step 1/2. Its function is as follows. Key enzyme in myo-inositol biosynthesis pathway that catalyzes the conversion of glucose 6-phosphate to 1-myo-inositol 1-phosphate in a NAD-dependent manner. This is Inositol-3-phosphate synthase from Citrus paradisi (Grapefruit).